Here is a 155-residue protein sequence, read N- to C-terminus: V-type proton ATPase 16 kDa proteolipid subunit c (155 aa).

Residues Met-1 to Tyr-10 are Lumenal-facing. A helical membrane pass occupies residues Ser-11–Gly-33. At Thr-34–Ser-55 the chain is on the cytoplasmic side. A helical membrane pass occupies residues Ile-56–Ile-76. Residues Ala-77–Gln-92 lie on the Lumenal side of the membrane. A helical transmembrane segment spans residues Leu-93–Gly-114. The Cytoplasmic segment spans residues Asp-115–Met-131. A helical membrane pass occupies residues Ile-132–Leu-152. The Lumenal segment spans residues Ser-153–Lys-155.

Belongs to the V-ATPase proteolipid subunit family. In terms of assembly, V-ATPase is a heteromultimeric enzyme made up of two complexes: the ATP-hydrolytic V1 complex and the proton translocation V0 complex. The V1 complex consists of three catalytic AB heterodimers that form a heterohexamer, three peripheral stalks each consisting of EG heterodimers, one central rotor including subunits D and F, and the regulatory subunits C and H. The proton translocation complex V0 consists of the proton transport subunit a, a ring of proteolipid subunits c9c'', rotary subunit d, subunits e and f, and the accessory subunits ATP6AP1/Ac45 and ATP6AP2/PRR. Interacts with the V0 complex V-ATPase subunit a4 ATP6V0A4. Interacts with LASS2. Interacts with RNF182; this interaction leads to ubiquitination and degradation via the proteasome pathway. Ubiquitinated by RNF182, leading to its degradation via the ubiquitin-proteasome pathway.

The protein localises to the cytoplasmic vesicle. Its subcellular location is the clathrin-coated vesicle membrane. The protein resides in the secretory vesicle. It localises to the synaptic vesicle membrane. Its function is as follows. Proton-conducting pore forming subunit of the V0 complex of vacuolar(H+)-ATPase (V-ATPase), a multisubunit enzyme composed of a peripheral complex (V1) that hydrolyzes ATP and a membrane integral complex (V0) that translocates protons. V-ATPase is responsible for acidifying and maintaining the pH of intracellular compartments and in some cell types, is targeted to the plasma membrane, where it is responsible for acidifying the extracellular environment. The sequence is that of V-type proton ATPase 16 kDa proteolipid subunit c (Atp6v0c) from Mus musculus (Mouse).